Consider the following 94-residue polypeptide: Pyrimidine/purine nucleoside phosphorylase (94 aa).

This sequence belongs to the nucleoside phosphorylase PpnP family.

It catalyses the reaction a purine D-ribonucleoside + phosphate = a purine nucleobase + alpha-D-ribose 1-phosphate. It carries out the reaction adenosine + phosphate = alpha-D-ribose 1-phosphate + adenine. The enzyme catalyses cytidine + phosphate = cytosine + alpha-D-ribose 1-phosphate. The catalysed reaction is guanosine + phosphate = alpha-D-ribose 1-phosphate + guanine. It catalyses the reaction inosine + phosphate = alpha-D-ribose 1-phosphate + hypoxanthine. It carries out the reaction thymidine + phosphate = 2-deoxy-alpha-D-ribose 1-phosphate + thymine. The enzyme catalyses uridine + phosphate = alpha-D-ribose 1-phosphate + uracil. The catalysed reaction is xanthosine + phosphate = alpha-D-ribose 1-phosphate + xanthine. Catalyzes the phosphorolysis of diverse nucleosides, yielding D-ribose 1-phosphate and the respective free bases. Can use uridine, adenosine, guanosine, cytidine, thymidine, inosine and xanthosine as substrates. Also catalyzes the reverse reactions. The sequence is that of Pyrimidine/purine nucleoside phosphorylase from Saccharophagus degradans (strain 2-40 / ATCC 43961 / DSM 17024).